The following is a 164-amino-acid chain: Bacterial ferritin (164 aa).

In terms of domain architecture, Ferritin-like diiron spans 1 to 147 (MKGKKSVISR…QQLGLIARMG (147 aa)). Positions 18, 51, 54, 94, 129, and 132 each coordinate Fe cation.

It belongs to the bacterioferritin family. As to quaternary structure, heterooligomer of 24 subunits, arranged as 12 dimers, that are packed together to form an approximately spherical molecule with a central cavity, in which large amounts of iron can be deposited.

It catalyses the reaction 4 Fe(2+) + O2 + 4 H(+) = 4 Fe(3+) + 2 H2O. The enzyme catalyses Fe(2+)(in) = Fe(2+)(out). Functionally, iron-storage protein, whose ferroxidase center binds Fe(2+), oxidizes it using dioxygen to Fe(3+), and participates in the subsequent Fe(3+) oxide mineral core formation within the central cavity of the BFR protein shell. The protein is Bacterial ferritin of Paramagnetospirillum magnetotacticum (Aquaspirillum magnetotacticum).